The following is a 261-amino-acid chain: Leucine-rich repeat-containing protein 18 (261 aa).

LRR repeat units lie at residues 28–49, 51–72, 74–95, 97–118, 122–144, 145–167, and 168–189; these read GKKR…ILRL, DMDE…ISKF, NLRW…IGQM, SLLY…VELK, NIRA…GALK, ELHE…SKLP, and KLKK…EIFI.

Its subcellular location is the cytoplasm. In terms of biological role, may be involved in the regulation of spermatogenesis and sperm maturation. The polypeptide is Leucine-rich repeat-containing protein 18 (LRRC18) (Homo sapiens (Human)).